A 157-amino-acid polypeptide reads, in one-letter code: Endoribonuclease YbeY (157 aa).

Residues His114, His118, and His124 each contribute to the Zn(2+) site.

Belongs to the endoribonuclease YbeY family. The cofactor is Zn(2+).

It is found in the cytoplasm. Functionally, single strand-specific metallo-endoribonuclease involved in late-stage 70S ribosome quality control and in maturation of the 3' terminus of the 16S rRNA. The sequence is that of Endoribonuclease YbeY from Serratia proteamaculans (strain 568).